We begin with the raw amino-acid sequence, 409 residues long: Nucleoprotein (409 aa).

4 disordered regions span residues 1–32, 46–68, 164–196, and 238–258; these read MASG…SSGN, IPPP…SQQH, RSGR…EDDL, and VDQV…DDKM. Over residues 15-31 the composition is skewed to low complexity; sequence PVIKLGGPKPPKVGSSG. The segment at 29–160 is RNA-binding; it reads SSGNASWFQA…GNFRWDFIPL (132 aa). In terms of domain architecture, CoV N NTD spans 31–156; it reads GNASWFQAIK…GGPDGNFRWD (126 aa). The span at 166-179 shows a compositional bias: low complexity; that stretch reads GRSTAASSAASSRA. Composition is skewed to basic and acidic residues over residues 180–192 and 247–258; these read PSRE…RSGS and KGKEGNFGDDKM. 2 positions are modified to phosphoserine; by host: Ser-190 and Ser-192. The CoV N CTD domain maps to 215 to 331; it reads TKAKADEMAH…QCVDGVGTRP (117 aa). The tract at residues 226 to 333 is dimerization; that stretch reads RYCKRTIPPN…VDGVGTRPKD (108 aa). Cys-320 and Cys-323 are oxidised to a cystine. Positions 326–409 are disordered; the sequence is GVGTRPKDDE…GDAALGENEL (84 aa). Over residues 358 to 367 the composition is skewed to basic residues; it reads QRPKKEKKPK. Residues 368 to 384 show a composition bias toward basic and acidic residues; that stretch reads KHDDEVDKALTSDEERN. Thr-378 carries the post-translational modification Phosphothreonine; by host. Ser-379 carries the post-translational modification Phosphoserine; by host.

This sequence belongs to the gammacoronavirus nucleocapsid protein family. In terms of assembly, homooligomer. Both monomeric and oligomeric forms interact with RNA. Interacts with protein M. Interacts with NSP3; this interaction serves to tether the genome to the newly translated replicase-transcriptase complex at a very early stage of infection. ADP-ribosylated. The ADP-ribosylation is retained in the virion during infection. Post-translationally, phosphorylated on serine and threonine residues.

It is found in the virion. The protein localises to the host endoplasmic reticulum-Golgi intermediate compartment. The protein resides in the host Golgi apparatus. Its function is as follows. Packages the positive strand viral genome RNA into a helical ribonucleocapsid (RNP) and plays a fundamental role during virion assembly through its interactions with the viral genome and membrane protein M. Plays an important role in enhancing the efficiency of subgenomic viral RNA transcription as well as viral replication. In Avian infectious bronchitis virus (strain M41) (IBV), this protein is Nucleoprotein.